Here is a 449-residue protein sequence, read N- to C-terminus: MAQTPPTSEARPRPPVPTLFRVALAPIQAFFRLEAASGILLALCAVAAMVWANSPWAATYSAVFDARMTVGLAGVHAGFTIREFINDGLMTLFFFVVGMEIKRELSSGELRTFSRAVLPLIAAMGGMIVPAALYAAFNQGTPAQAGWAIPMATDIAFSIGCLTLVKTRVSHGLVVFLTALAIFDDIGGILVIALFYGSGLHVSWLVGALGVLAVLACLNHFQVRNGVAYALAGAALWYTMHHGGIHATLSGVVLGLFMPARPLRPGRHVLEELRLYVDRALQTAMDEATRGAQILYLEERLEELEPPLNRFVHLWHVPVAYGIVPLFALANSGISLEGMGWADLLRPLPLGIIAGLFVGKQVGIFLFTWGSLKLGVADRPGGATLPQLHGVAVVAGIGFTVALFVAGLAFPTQPELLTEAKLGILVGSLLSAVVGYALLRFVAKPAVPA.

11 helical membrane passes run 38 to 58, 79 to 99, 117 to 137, 145 to 165, 175 to 195, 198 to 218, 240 to 260, 311 to 331, 347 to 367, 390 to 410, and 422 to 442; these read GILL…PWAA, FTIR…VVGM, VLPL…YAAF, AGWA…LTLV, VFLT…IALF, SGLH…LACL, MHHG…FMPA, FVHL…ALAN, PLPL…IFLF, GVAV…GLAF, and LGIL…LRFV.

The protein belongs to the NhaA Na(+)/H(+) (TC 2.A.33) antiporter family.

Its subcellular location is the cell inner membrane. It carries out the reaction Na(+)(in) + 2 H(+)(out) = Na(+)(out) + 2 H(+)(in). Functionally, na(+)/H(+) antiporter that extrudes sodium in exchange for external protons. In Myxococcus xanthus (strain DK1622), this protein is Na(+)/H(+) antiporter NhaA 1.